We begin with the raw amino-acid sequence, 96 residues long: Dynein light chain roadblock-type 2 (96 aa).

Ala-2 is modified (N-acetylalanine).

Belongs to the GAMAD family. Homodimer. The cytoplasmic dynein 1 complex consists of two catalytic heavy chains (HCs) and a number of non-catalytic subunits presented by intermediate chains (ICs), light intermediate chains (LICs) and light chains (LCs); the composition seems to vary in respect to the IC, LIC and LC composition. The heavy chain homodimer serves as a scaffold for the probable homodimeric assembly of the respective non-catalytic subunits. The ICs and LICs bind directly to the HC dimer and the LCs assemble on the IC dimer. Interacts with DYNC1I1 and DYNC1I2. Self-associates. Interacts with DYNLRB1. High expression in heart, brain, placenta, skeletal muscle, prostate and small intestine; moderate in kidney, pancreas, spleen, testis, ovary and colon; low in lung, liver, thymus and leukocyte.

It localises to the cytoplasm. The protein localises to the cytoskeleton. Acts as one of several non-catalytic accessory components of the cytoplasmic dynein 1 complex that are thought to be involved in linking dynein to cargos and to adapter proteins that regulate dynein function. Cytoplasmic dynein 1 acts as a motor for the intracellular retrograde motility of vesicles and organelles along microtubules. In Homo sapiens (Human), this protein is Dynein light chain roadblock-type 2 (DYNLRB2).